We begin with the raw amino-acid sequence, 577 residues long: Moesin (577 aa).

The region spanning 2–295 (PKTISVRVTT…GNHELYMRRR (294 aa)) is the FERM domain. Ser74 carries the post-translational modification Phosphoserine. Lys79 is modified (N6-acetyllysine). Lys83 bears the N6-succinyllysine mark. The [IL]-x-C-x-x-[DE] motif signature appears at 115–120 (IYCPPE). Tyr116 carries the phosphotyrosine modification. The residue at position 117 (Cys117) is an S-nitrosocysteine. 2 positions are modified to N6-acetyllysine: Lys139 and Lys165. Disordered regions lie at residues 322–342 (LLENEKKKRELAEKEKEKIER), 358–419 (TKKA…QLAS), and 468–518 (STPH…NERV). The segment covering 358 to 401 (TKKAQQELEEQTRRALELEQERKRAQSEAEKLAKERQEAEEAKE) has biased composition (basic and acidic residues). Residue Ser407 is modified to Phosphoserine. The span at 492 to 518 (AELRADAMAKDRSEEERTTEAEKNERV) shows a compositional bias: basic and acidic residues. Residue Ser527 is modified to Phosphoserine. Thr558 carries the post-translational modification Phosphothreonine; by ROCK2 and STK10.

In terms of assembly, in resting T-cells, part of a PAG1-NHERF1-MSN complex which is disrupted upon TCR activation. Interacts with NHERF1. Interacts with PPP1R16B. Interacts with SELPLG and SYK; these interactions mediate the activation of SYK by SELPLG. Interacts with PDPN (via cytoplasmic domain); this interaction activates RHOA and promotes epithelial-mesenchymal transition. Interacts with SPN/CD43 cytoplasmic tail. Interacts with CD44. Interacts with ICAM2. Interacts with ICAM3 (via C-terminus). Interacts with PDZD8. Interacts with F-actin. Interacts with CD46. Interacts with PTPN6. Post-translationally, phosphorylation on Thr-558 by STK10 negatively regulates lymphocyte migration and polarization. Phosphorylation on Thr-558 is crucial for the formation of microvilli-like structures. Phosphorylation by ROCK2 suppresses the head-to-tail association of the N-terminal and C-terminal halves resulting in an opened conformation which is capable of actin and membrane-binding. In terms of processing, S-nitrosylation of Cys-117 is induced by interferon-gamma and oxidatively-modified low-densitity lipoprotein (LDL(ox)) implicating the iNOS-S100A8/9 transnitrosylase complex.

It localises to the cell membrane. The protein resides in the cytoplasm. Its subcellular location is the cytoskeleton. It is found in the apical cell membrane. The protein localises to the cell projection. It localises to the microvillus membrane. The protein resides in the microvillus. In terms of biological role, ezrin-radixin-moesin (ERM) family protein that connects the actin cytoskeleton to the plasma membrane and thereby regulates the structure and function of specific domains of the cell cortex. Tethers actin filaments by oscillating between a resting and an activated state providing transient interactions between moesin and the actin cytoskeleton. Once phosphorylated on its C-terminal threonine, moesin is activated leading to interaction with F-actin and cytoskeletal rearrangement. These rearrangements regulate many cellular processes, including cell shape determination, membrane transport, and signal transduction. The role of moesin is particularly important in immunity acting on both T and B-cells homeostasis and self-tolerance, regulating lymphocyte egress from lymphoid organs. Modulates phagolysosomal biogenesis in macrophages. Also participates in immunologic synapse formation. In Mus musculus (Mouse), this protein is Moesin.